The sequence spans 135 residues: uncharacterized protein (135 aa).

This sequence belongs to the asp23 family.

This is an uncharacterized protein from Bacillus subtilis (strain 168).